The following is a 354-amino-acid chain: 3-isopropylmalate dehydrogenase (354 aa).

R96, R106, R132, and D223 together coordinate substrate. D223, D247, and D251 together coordinate Mg(2+). 283–295 (GSAPDIAGQGKAD) contributes to the NAD(+) binding site.

This sequence belongs to the isocitrate and isopropylmalate dehydrogenases family. LeuB type 2 subfamily. As to quaternary structure, homodimer. The cofactor is Mg(2+). It depends on Mn(2+) as a cofactor.

It localises to the cytoplasm. It carries out the reaction (2R,3S)-3-isopropylmalate + NAD(+) = 4-methyl-2-oxopentanoate + CO2 + NADH. It functions in the pathway amino-acid biosynthesis; L-leucine biosynthesis; L-leucine from 3-methyl-2-oxobutanoate: step 3/4. Functionally, catalyzes the oxidation of 3-carboxy-2-hydroxy-4-methylpentanoate (3-isopropylmalate) to 3-carboxy-4-methyl-2-oxopentanoate. The product decarboxylates to 4-methyl-2 oxopentanoate. This chain is 3-isopropylmalate dehydrogenase, found in Thermobifida fusca (strain YX).